Reading from the N-terminus, the 372-residue chain is Glutamate 5-kinase (372 aa).

ATP is bound at residue lysine 14. Substrate is bound by residues serine 54, aspartate 141, and asparagine 153. Position 173-174 (173-174 (TD)) interacts with ATP. In terms of domain architecture, PUA spans 280 to 358 (RGTLVLDAGA…DAIEKLLGYV (79 aa)).

This sequence belongs to the glutamate 5-kinase family.

Its subcellular location is the cytoplasm. The catalysed reaction is L-glutamate + ATP = L-glutamyl 5-phosphate + ADP. It functions in the pathway amino-acid biosynthesis; L-proline biosynthesis; L-glutamate 5-semialdehyde from L-glutamate: step 1/2. In terms of biological role, catalyzes the transfer of a phosphate group to glutamate to form L-glutamate 5-phosphate. The protein is Glutamate 5-kinase of Ectopseudomonas mendocina (strain ymp) (Pseudomonas mendocina).